Reading from the N-terminus, the 102-residue chain is Thioredoxin (102 aa).

Positions 1-102 constitute a Thioredoxin domain; sequence MVQIVSQDNF…SLVKLISKHQ (102 aa). C28 and C31 are disulfide-bonded.

The protein belongs to the thioredoxin family.

Functionally, participates in various redox reactions through the reversible oxidation of its active center dithiol to a disulfide and catalyzes dithiol-disulfide exchange reactions. The polypeptide is Thioredoxin (trxA) (Chlamydia muridarum (strain MoPn / Nigg)).